A 1028-amino-acid polypeptide reads, in one-letter code: Unconventional myosin-Ic (1028 aa).

Residue Met-1 is modified to N-acetylmethionine. Residues 12 to 696 (GVQDFVLLEN…TLFATEDALE (685 aa)) form the Myosin motor domain. Residues Asn-53, Tyr-61, 104-113 (SGESGAGKTE), and 157-161 (NDNSS) each bind ATP. Lys-348 carries the post-translational modification N6-methyllysine. The tract at residues 573-595 (LSKLMEILMSKEPSYIRCIKPND) is actin-binding. IQ domains follow at residues 699-728 (KQSLATKMQATWRGFYRRKKFLHMKHSAIA) and 722-751 (MKHSAIAIQSWWRGTLGRRKAAKRKWAVQT). The 175-residue stretch at 850–1024 (KDNYPQSVPR…NGHLTVVAPR (175 aa)) folds into the TH1 domain.

Belongs to the TRAFAC class myosin-kinesin ATPase superfamily. Myosin family. As to quaternary structure, interacts (via its IQ motifs) with CALM.

It localises to the cytoplasm. Its subcellular location is the cell cortex. It is found in the cell projection. The protein localises to the ruffle membrane. The protein resides in the cytoplasmic vesicle. It localises to the stereocilium membrane. In terms of biological role, myosins are actin-based motor molecules with ATPase activity. Unconventional myosins serve in intracellular movements. Their highly divergent tails are presumed to bind to membranous compartments, which would be moved relative to actin filaments. In Gallus gallus (Chicken), this protein is Unconventional myosin-Ic (MYO1C).